A 212-amino-acid polypeptide reads, in one-letter code: Thymidylate kinase (212 aa).

11 to 18 (GPEGAGKT) contributes to the ATP binding site.

Belongs to the thymidylate kinase family.

The catalysed reaction is dTMP + ATP = dTDP + ADP. Phosphorylation of dTMP to form dTDP in both de novo and salvage pathways of dTTP synthesis. The protein is Thymidylate kinase of Streptococcus pneumoniae (strain Taiwan19F-14).